We begin with the raw amino-acid sequence, 636 residues long: C-terminal binding protein AN (636 aa).

A disordered region spans residues 1-21 (MSKIRSSATMPHRDQPSPASP). Residues Ser-91, 147–148 (WL), 169–174 (VGRSVS), Asp-193, 231–237 (CALTNDT), 258–260 (TGS), Asp-284, and 307–311 (RSADY) contribute to the NAD(+) site. Residues 341 to 489 (VSDEEVEESE…PLEVMQESSP (149 aa)) form a disordered region. The segment covering 342 to 357 (SDEEVEESEASEEEEQ) has biased composition (acidic residues). The segment covering 369–384 (ESTSRQQGESTLTSTE) has biased composition (polar residues). A compositionally biased stretch (basic and acidic residues) spans 385-395 (IVRREASELKE). Residues 398-409 (SPGQQHVSQNTA) show a composition bias toward polar residues. A compositionally biased stretch (basic residues) spans 417 to 429 (SRSGKKAKKRHSQ). Positions 430 to 445 (QKYMQKTDGSSGLNEE) are enriched in polar residues. Over residues 470 to 480 (SPEDSRSRKTP) the composition is skewed to basic and acidic residues.

The protein belongs to the D-isomer specific 2-hydroxyacid dehydrogenase family. Plant AN subfamily. As to quaternary structure, homodimer. Interacts with KCBP and SUB (via intra-cellular domain); AN is not required for the correct subcellular localization and recycling of SUB. Binds to SOKs proteins polymers (e.g. SOK1, SOK2, SOK3 and SOK4). Interacts with IPGA1 on microtubule upon mechanical stress to regulate microtubule organization. Requires NAD(+) as cofactor. In terms of tissue distribution, expressed in cotyledons, leaves, roots, stems and floral buds.

It is found in the cytoplasm. The protein resides in the golgi apparatus. The protein localises to the trans-Golgi network. It localises to the cytoskeleton. Involved in controlling the equilibrium between tubular and stacked structures in the Golgi complex. Required for cortical microtubules (MTs) arrangement that confers cell shape. Cooperatively with IPGA1, negatively regulates cortical microtubules (CMTs) organization in response to mechanical stress and modulates pavement cells morphogenesis leading to puzzle shape, probably in an AAA1/KTN1-dependent manner. Regulates the width of leaves by controlling the polar elongation of leaf cells. Involved in the regulation of trichome branching. Seems to not be able to regulate gene transcription. Regulates epidermal cell divisions and elongation in a non-cell-autonomous manner (regulated by subepidermal cells), but regulates epidermal cell polarity, shape, trichome branching and elongation in a cell-autonomous manner. Negatively regulates growth in the petiole elongation. Prevents lipid peroxidation as a result of abiotic stress response. Is involved in the SUB-dependent signaling mechanism and may act in a membrane trafficking event around the trans-Golgi network. This is C-terminal binding protein AN from Arabidopsis thaliana (Mouse-ear cress).